A 184-amino-acid polypeptide reads, in one-letter code: MWPPDAEPEPDPESAHGPRSGRTVPGLRALLPARAFLCSLKGRLLLAESGLSFITFICYVVSSASAFLTVPLLEFLLAVYFLFADAMQLNDKWQGLCWPMMDFLRCVTAALIYFVISITAVAKYSDGAYKAAGVFGFFATIVFAIDFYLIFNEVAKFLKQGDSGNETTAHRTEEENSNSDSDSD.

Residues 1-12 (MWPPDAEPEPDP) show a composition bias toward acidic residues. The tract at residues 1-22 (MWPPDAEPEPDPESAHGPRSGR) is disordered. Residues 36–155 (FLCSLKGRLL…DFYLIFNEVA (120 aa)) enclose the MARVEL domain. 3 consecutive transmembrane segments (helical) span residues 64–84 (ASAFLTVPLLEFLLAVYFLFA), 96–116 (LCWPMMDFLRCVTAALIYFVI), and 131–151 (AAGVFGFFATIVFAIDFYLIF). The interval 163-184 (SGNETTAHRTEEENSNSDSDSD) is disordered. Acidic residues predominate over residues 175-184 (ENSNSDSDSD).

Belongs to the chemokine-like factor family.

The protein localises to the membrane. The polypeptide is CKLF-like MARVEL transmembrane domain-containing protein 3 (Cmtm3) (Mus musculus (Mouse)).